Here is a 23-residue protein sequence, read N- to C-terminus: NCPYCVVYCCPPAYCEASGCRPP.

3 disulfide bridges follow: C2–C10, C5–C15, and C9–C20. At P23 the chain carries Proline amide; partial.

Post-translationally, the C-terminal amidation is described in Ref.1 and PubMed:23031820, but not in PubMed:22709442 and PubMed:36235146. Ju et al. (2022) describe a disulfide connectivity (C55-C61; C56-C69; C66-C68) that differs for the usual one. In terms of tissue distribution, expressed by the venom duct. Is present in all duct parts with a highest content in part 2 (proximal of the venom bulb) and then decreases in concentration toward the end of the duct.

It localises to the secreted. Causes convulsions mice. This chain is Textile convulsant peptide, found in Conus textile (Cloth-of-gold cone).